A 350-amino-acid polypeptide reads, in one-letter code: MDESLAKDAVFVASSKPSDLTTEVVGPDFNKYDERKKAGGPGITVEELVESYGKIGFQATNLHDAVTIINEMRNWRDPNPPEEKSDRATIFLGYTSNLISSGVREVLRYLVQHKCVDVIVTTAGGVEEDIIKCLGPTYVGDFHLDGKNLRAKGLNRIGNLIVPNDNYCRFEEWIFPILNKMVEEQETLGTHWTPSSFIRRLGKEINDESSVLYWAYKNNIPIYSPALTDGSIGDMLYFHTYKATPRPLVLDIVADIRNMNTHAVRANKSGIIILGGGVVKHHICNANLMRNGAEWSVYINSANEFDGSDAGARPDEAVSWGKIRGDAKKVKVYGEVSLLFPLIVAATFAK.

NAD(+)-binding positions include S96–S100, T122–G124, E128, and D229. E127–E128 is a spermidine binding site. D234 serves as a coordination point for spermidine. G276 is a binding site for NAD(+). H281 provides a ligand contact to spermidine. S301–A302 is a binding site for NAD(+). Spermidine contacts are provided by residues G307 to D309 and E316 to K322. Residue K322 is the Nucleophile of the active site. E335 to V336 provides a ligand contact to NAD(+).

It belongs to the deoxyhypusine synthase family. NAD(+) is required as a cofactor.

It carries out the reaction [eIF5A protein]-L-lysine + spermidine = [eIF5A protein]-deoxyhypusine + propane-1,3-diamine. The protein operates within protein modification; eIF5A hypusination. Functionally, catalyzes the NAD-dependent oxidative cleavage of spermidine and the subsequent transfer of the butylamine moiety of spermidine to the epsilon-amino group of a specific lysine residue of the eIF-5A precursor protein to form the intermediate deoxyhypusine residue. This Schizosaccharomyces pombe (strain 972 / ATCC 24843) (Fission yeast) protein is Probable deoxyhypusine synthase.